We begin with the raw amino-acid sequence, 116 residues long: Iron-sulfur cluster insertion protein ErpA (116 aa).

Residues C44, C108, and C110 each contribute to the iron-sulfur cluster site.

The protein belongs to the HesB/IscA family. As to quaternary structure, homodimer. Iron-sulfur cluster serves as cofactor.

Functionally, required for insertion of 4Fe-4S clusters for at least IspG. This is Iron-sulfur cluster insertion protein ErpA from Shewanella oneidensis (strain ATCC 700550 / JCM 31522 / CIP 106686 / LMG 19005 / NCIMB 14063 / MR-1).